The primary structure comprises 375 residues: G-protein coupled estrogen receptor 1 (375 aa).

Met-1 is modified (N-acetylmethionine). The Extracellular portion of the chain corresponds to 1–62 (MAATTPAQDV…QQYVIALFLS (62 aa)). N-linked (GlcNAc...) asparagine glycosylation is found at Asn-32 and Asn-44. A helical transmembrane segment spans residues 63-84 (CLYTIFLFPIGFVGNILILVVN). Over 85 to 96 (ISFREKMTIPDL) the chain is Cytoplasmic. Residues 97–120 (YFINLAAADLILVADSLIEVFNLD) traverse the membrane as a helical segment. Residues 121–132 (EQYYDIAVLCTF) are Extracellular-facing. Cys-130 and Cys-207 are joined by a disulfide. Residues 133 to 153 (MSLFLQINMYSSVFFLTWMSF) traverse the membrane as a helical segment. At 154–175 (DRYLALAKAMRCGLFRTKHHAR) the chain is on the cytoplasmic side. The helical transmembrane segment at 176-194 (LSCGLIWMASVSATLVPFT) threads the bilayer. The Extracellular portion of the chain corresponds to 195–220 (AVHLRHTEEACFCFADVREVQWLEVT). A helical transmembrane segment spans residues 221-236 (LGFIVPFAIIGLCYSL). Topologically, residues 237 to 259 (IVRALIRAHRHRGLRPRRQKALR) are cytoplasmic. Residues 260–280 (MIFAVVLVFFICWLPENVFIS) traverse the membrane as a helical segment. Residues 281 to 306 (VHLLQWAQPGDTPCKQSFRHAYPLTG) lie on the Extracellular side of the membrane. The chain crosses the membrane as a helical span at residues 307 to 327 (HIVNLAAFSNSCLSPLIYSFL). Over 328–375 (GETFRDKLRLYVAQKTSLPALNRFCHATLKAVIPDSTEQSDVKFSSAV) the chain is Cytoplasmic.

This sequence belongs to the G-protein coupled receptor 1 family. As to quaternary structure, homodimer. Heterodimer; heterodimerizes with other G-protein-coupled receptor (GPCRs) like CRHR1, HTR1A and PAQR8. Interacts with RAMP3; the interaction confers proper subcellular localization and function in cardioprotection. Interacts with KRT7 and KRT8. Interacts with EGFR; the interaction increases after agonist-induced stimulation in cancer-associated fibroblasts (CAF). Interacts with EGFR and ESR1. Interacts (via C-terminus tail motif) with DLG4 (via N-terminus tandem pair of PDZ domains); the interaction is direct and induces the increase of GPER1 protein levels residing at the plasma membrane surface in a estradiol-independent manner. Ubiquitinated; ubiquitination occurs at the plasma membrane and leads to proteasome-mediated degradation. In terms of processing, glycosylated. Expressed in the brain. Expressed in neurons of the hippocampus, hypothalamic paraventricular nucleus (PVN), supraoptic nucleus (SON) and the median eminence. Expressed in magnocellular neurosecretory cells (MNCs) which secrete oxytocin but not in MNCs which secrete vasopressin. Expressed in glial cells. Expressed in the nucleus ambiguous. Expressed in epithelial cells, in pachytene spermatocytes (PS) (at protein level). Expressed strongly in vascular endothelial cells and poorly in vascular smooth muscle cells (VSMC). Expressed in the brain, lung, pituitary gland, adrenal medulla, renal pelvis and ovary. Expressed in CA1 hippocampus. Expressed weakly in heart, skeletal muscle and kidney.

It localises to the nucleus. The protein localises to the cytoplasm. Its subcellular location is the perinuclear region. It is found in the cytoskeleton. The protein resides in the cytoplasmic vesicle membrane. It localises to the cell membrane. The protein localises to the basolateral cell membrane. Its subcellular location is the endoplasmic reticulum membrane. It is found in the early endosome. The protein resides in the recycling endosome. It localises to the golgi apparatus. The protein localises to the trans-Golgi network. Its subcellular location is the golgi apparatus membrane. It is found in the cell projection. The protein resides in the dendrite. It localises to the dendritic spine membrane. The protein localises to the axon. Its subcellular location is the postsynaptic density. It is found in the mitochondrion membrane. Functionally, G-protein coupled estrogen receptor that binds to 17-beta-estradiol (E2) with high affinity, leading to rapid and transient activation of numerous intracellular signaling pathways. Stimulates cAMP production, calcium mobilization and tyrosine kinase Src inducing the release of heparin-bound epidermal growth factor (HB-EGF) and subsequent transactivation of the epidermal growth factor receptor (EGFR), activating downstream signaling pathways such as PI3K/Akt and ERK/MAPK. Mediates pleiotropic functions among others in the cardiovascular, endocrine, reproductive, immune and central nervous systems. Has a role in cardioprotection by reducing cardiac hypertrophy and perivascular fibrosis in a RAMP3-dependent manner. Regulates arterial blood pressure by stimulating vasodilation and reducing vascular smooth muscle and microvascular endothelial cell proliferation. Plays a role in blood glucose homeostasis contributing to the insulin secretion response by pancreatic beta cells. Triggers mitochondrial apoptosis during pachytene spermatocyte differentiation. Stimulates uterine epithelial cell proliferation. Enhances uterine contractility in response to oxytocin. Contributes to thymic atrophy by inducing apoptosis. Attenuates TNF-mediated endothelial expression of leukocyte adhesion molecules. Promotes neuritogenesis in developing hippocampal neurons. Plays a role in acute neuroprotection against NMDA-induced excitotoxic neuronal death. Increases firing activity and intracellular calcium oscillations in luteinizing hormone-releasing hormone (LHRH) neurons. Inhibits early osteoblast proliferation at growth plate during skeletal development. Inhibits mature adipocyte differentiation and lipid accumulation. Involved in the recruitment of beta-arrestin 2 ARRB2 at the plasma membrane in epithelial cells. Also functions as a receptor for aldosterone mediating rapid regulation of vascular contractibility through the PI3K/ERK signaling pathway. Involved in cancer progression regulation. Stimulates cancer-associated fibroblast (CAF) proliferation by a rapid genomic response through the EGFR/ERK transduction pathway. Associated with EGFR, may act as a transcription factor activating growth regulatory genes (c-fos, cyclin D1). Promotes integrin alpha-5/beta-1 and fibronectin (FN) matrix assembly in breast cancer cells. This chain is G-protein coupled estrogen receptor 1 (Gper1), found in Rattus norvegicus (Rat).